The sequence spans 174 residues: Auxin-responsive protein IAA2 (174 aa).

Residues 16-20 carry the EAR-like (transcriptional repression) motif; it reads LCLGL. Positions 44 to 67 are disordered; the sequence is FEETRDEEESTPPTKTQIVGWPPV. The region spanning 77–164 is the PB1 domain; that stretch reads VSYVKVSMDG…SCKRLRIMKG (88 aa).

Belongs to the Aux/IAA family. As to quaternary structure, homodimers and heterodimers. Interacts with the auxin-responsive protein IAA1. Interacts with TPL. As to expression, preferentially expressed in vegetative organs.

It localises to the nucleus. Its function is as follows. Aux/IAA proteins are short-lived transcriptional factors that function as repressors of early auxin response genes at low auxin concentrations. Repression is thought to result from the interaction with auxin response factors (ARFs), proteins that bind to the auxin-responsive promoter element (AuxRE). Formation of heterodimers with ARF proteins may alter their ability to modulate early auxin response genes expression. The protein is Auxin-responsive protein IAA2 (IAA2) of Arabidopsis thaliana (Mouse-ear cress).